The following is a 686-amino-acid chain: Methionine--tRNA ligase (686 aa).

Residues 15 to 25 (PYANGSIHLGH) carry the 'HIGH' region motif. Zn(2+)-binding residues include Cys-146, Cys-149, Cys-159, and Cys-162. A 'KMSKS' region motif is present at residues 332-336 (KMSKS). An ATP-binding site is contributed by Lys-335. Residues 585 to 686 (AFEAVDMRIA…EGAQPGMRVM (102 aa)) form the tRNA-binding domain.

Belongs to the class-I aminoacyl-tRNA synthetase family. MetG type 1 subfamily. Homodimer. It depends on Zn(2+) as a cofactor.

The protein resides in the cytoplasm. It carries out the reaction tRNA(Met) + L-methionine + ATP = L-methionyl-tRNA(Met) + AMP + diphosphate. Is required not only for elongation of protein synthesis but also for the initiation of all mRNA translation through initiator tRNA(fMet) aminoacylation. In Aliivibrio salmonicida (strain LFI1238) (Vibrio salmonicida (strain LFI1238)), this protein is Methionine--tRNA ligase.